An 81-amino-acid polypeptide reads, in one-letter code: ATP synthase subunit c, chloroplastic (81 aa).

The next 2 membrane-spanning stretches (helical) occupy residues 3–23 and 57–77; these read AIVS…AAIG and LAFM…LLFA.

This sequence belongs to the ATPase C chain family. In terms of assembly, F-type ATPases have 2 components, F(1) - the catalytic core - and F(0) - the membrane proton channel. F(1) has five subunits: alpha(3), beta(3), gamma(1), delta(1), epsilon(1). F(0) has four main subunits: a(1), b(1), b'(1) and c(10-14). The alpha and beta chains form an alternating ring which encloses part of the gamma chain. F(1) is attached to F(0) by a central stalk formed by the gamma and epsilon chains, while a peripheral stalk is formed by the delta, b and b' chains.

It is found in the plastid. The protein resides in the chloroplast thylakoid membrane. Its function is as follows. F(1)F(0) ATP synthase produces ATP from ADP in the presence of a proton or sodium gradient. F-type ATPases consist of two structural domains, F(1) containing the extramembraneous catalytic core and F(0) containing the membrane proton channel, linked together by a central stalk and a peripheral stalk. During catalysis, ATP synthesis in the catalytic domain of F(1) is coupled via a rotary mechanism of the central stalk subunits to proton translocation. Functionally, key component of the F(0) channel; it plays a direct role in translocation across the membrane. A homomeric c-ring of between 10-14 subunits forms the central stalk rotor element with the F(1) delta and epsilon subunits. This chain is ATP synthase subunit c, chloroplastic, found in Cyanidioschyzon merolae (strain NIES-3377 / 10D) (Unicellular red alga).